Here is a 293-residue protein sequence, read N- to C-terminus: MAIPKIASYPLPVSLPTNKVDWRIDASRAVLLIHDMQEYFVHYFDSQAEPIPSLIKHIQQLKAHAKQAGIPVVYTAQPANQDPAERALLSDFWGPGLSEETAIIAPLAPESGDVQLTKWRYSAFKKSPLLDWLRETGRDQLIITGVYAHIGILSTALDAFMFDIQPFVIGDGVADFSLSDHEFSLRYISGRTGAVKSTQQACLEIAAQHSKLTGLSLRTMQHDVAAALNLSVDEVDVQENLLFLGLDSIRAIQLLEKWKAQGADISFAQLMEHVTLQQWWQTIQANLHQPCSA.

Residues K211–L287 form the Carrier domain. Position 248 is an O-(pantetheine 4'-phosphoryl)serine (S248).

It belongs to the isochorismatase family. Pantetheine 4'-phosphate is required as a cofactor.

It catalyses the reaction isochorismate + H2O = (2S,3S)-2,3-dihydroxy-2,3-dihydrobenzoate + pyruvate. It participates in siderophore biosynthesis; vibriobactin biosynthesis. Functionally, involved in the biosynthesis of the catechol siderophore vibriobactin. Vibriobactin is a chelating compound involved in transporting iron from the bacterial environment into the cell cytoplasm. The polypeptide is Vibriobactin-specific isochorismatase (vibB) (Vibrio cholerae serotype O1 (strain ATCC 39541 / Classical Ogawa 395 / O395)).